The following is a 252-amino-acid chain: Pantothenate synthetase (252 aa).

29 to 36 is an ATP binding site; the sequence is MGNLHAGH. The active-site Proton donor is His36. Residue Gln60 coordinates (R)-pantoate. Gln60 contributes to the beta-alanine binding site. 146-149 contacts ATP; sequence GEKD. A (R)-pantoate-binding site is contributed by Gln152. Residues Val175 and 183-186 each bind ATP; that span reads CSSR.

The protein belongs to the pantothenate synthetase family. In terms of assembly, homodimer.

It localises to the cytoplasm. It catalyses the reaction (R)-pantoate + beta-alanine + ATP = (R)-pantothenate + AMP + diphosphate + H(+). It participates in cofactor biosynthesis; (R)-pantothenate biosynthesis; (R)-pantothenate from (R)-pantoate and beta-alanine: step 1/1. In terms of biological role, catalyzes the condensation of pantoate with beta-alanine in an ATP-dependent reaction via a pantoyl-adenylate intermediate. In Legionella pneumophila subsp. pneumophila (strain Philadelphia 1 / ATCC 33152 / DSM 7513), this protein is Pantothenate synthetase.